The following is a 453-amino-acid chain: Bifunctional protein GlmU (453 aa).

The segment at 1–225 is pyrophosphorylase; it reads MNIVILAAGT…EWETLGVNSK (225 aa). UDP-N-acetyl-alpha-D-glucosamine is bound by residues 6 to 9, lysine 20, glutamine 71, 76 to 77, 98 to 100, glycine 135, glutamate 150, asparagine 165, and asparagine 223; these read LAAG, GT, and YGD. Residue aspartate 100 participates in Mg(2+) binding. Asparagine 223 is a binding site for Mg(2+). The tract at residues 226 to 246 is linker; it reads AQLAELERIHQRNLADALLAA. The tract at residues 247–453 is N-acetyltransferase; that stretch reads GVTLADPARI…GYVRPVKKKS (207 aa). Residues arginine 329 and lysine 347 each coordinate UDP-N-acetyl-alpha-D-glucosamine. Histidine 359 (proton acceptor) is an active-site residue. UDP-N-acetyl-alpha-D-glucosamine-binding residues include tyrosine 362 and asparagine 373. Residues alanine 376, 382-383, serine 401, and alanine 419 each bind acetyl-CoA; that span reads NY.

In the N-terminal section; belongs to the N-acetylglucosamine-1-phosphate uridyltransferase family. It in the C-terminal section; belongs to the transferase hexapeptide repeat family. In terms of assembly, homotrimer. Requires Mg(2+) as cofactor.

It localises to the cytoplasm. The catalysed reaction is alpha-D-glucosamine 1-phosphate + acetyl-CoA = N-acetyl-alpha-D-glucosamine 1-phosphate + CoA + H(+). The enzyme catalyses N-acetyl-alpha-D-glucosamine 1-phosphate + UTP + H(+) = UDP-N-acetyl-alpha-D-glucosamine + diphosphate. It participates in nucleotide-sugar biosynthesis; UDP-N-acetyl-alpha-D-glucosamine biosynthesis; N-acetyl-alpha-D-glucosamine 1-phosphate from alpha-D-glucosamine 6-phosphate (route II): step 2/2. The protein operates within nucleotide-sugar biosynthesis; UDP-N-acetyl-alpha-D-glucosamine biosynthesis; UDP-N-acetyl-alpha-D-glucosamine from N-acetyl-alpha-D-glucosamine 1-phosphate: step 1/1. Its pathway is bacterial outer membrane biogenesis; LPS lipid A biosynthesis. Its function is as follows. Catalyzes the last two sequential reactions in the de novo biosynthetic pathway for UDP-N-acetylglucosamine (UDP-GlcNAc). The C-terminal domain catalyzes the transfer of acetyl group from acetyl coenzyme A to glucosamine-1-phosphate (GlcN-1-P) to produce N-acetylglucosamine-1-phosphate (GlcNAc-1-P), which is converted into UDP-GlcNAc by the transfer of uridine 5-monophosphate (from uridine 5-triphosphate), a reaction catalyzed by the N-terminal domain. In Burkholderia mallei (strain NCTC 10247), this protein is Bifunctional protein GlmU.